Reading from the N-terminus, the 183-residue chain is MKTCFLSIWRVVDPIYFFFSRLSLIDNDQKSVFRVRLTKYKGHHVVLSDGTHIRKNDVLVKIHLHNIKLIRELQSIESAVRKGIIIYQKVYQSMPLLLDYINNHKKSEKIKGIIGITMLDKGVERLGFDVITPVNPFYRCFKKVSHVPILYLTSKPVSLRHLPNSSYLFISKEKLQKTYQKKD.

This is an uncharacterized protein from Bacillus subtilis (strain 168).